A 391-amino-acid chain; its full sequence is MILNCPHFQQQDCVSCQWLEKPYATQLTDKEIDLKRLISPFILQNFTEILPPVQSSQKQFRNKAKMVVSGSVERPILGILKDQTDPQSGIDLCDCPLYPTEFEALFPILKDFIARAGLVPYNISKKKGELKYILITQSRYNQSIMLRFVLKSEQKRPLVERELPNLLAKLPKDSVVSLNIQPQHAAILEGETEIFLTEKTTIEENFNDIPLFIRPQGFFQTNPNVASQLYATAQNWIKDLAIQQFWDLFCGVGGFGLHCAKALQEKNENVQLTGIEISASAIASATKSAEQLQLKNITFASLDSAQFALNEKSATPDLVIVNPPRRGIGKPLAEFLNQLGTPYLIYSSCNARTMAQDFEALSNYSLQKVQLFDMFPHTSHYEVLTFLVKKS.

Residues Cys-5, Cys-13, Cys-16, and Cys-95 each contribute to the [4Fe-4S] cluster site. S-adenosyl-L-methionine-binding residues include Gln-220, Phe-249, Glu-276, and Asn-322. Cys-349 (nucleophile) is an active-site residue.

The protein belongs to the class I-like SAM-binding methyltransferase superfamily. RNA M5U methyltransferase family. RlmC subfamily.

It catalyses the reaction uridine(747) in 23S rRNA + S-adenosyl-L-methionine = 5-methyluridine(747) in 23S rRNA + S-adenosyl-L-homocysteine + H(+). Its function is as follows. Catalyzes the formation of 5-methyl-uridine at position 747 (m5U747) in 23S rRNA. The chain is 23S rRNA (uracil(747)-C(5))-methyltransferase RlmC from Actinobacillus pleuropneumoniae serotype 5b (strain L20).